Here is a 194-residue protein sequence, read N- to C-terminus: PRELI domain containing protein 3B (194 aa).

Residues 1-172 (MKIWTSEHVF…VIHKLNAEIE (172 aa)) enclose the PRELI/MSF1 domain. A phosphoserine mark is found at serine 46 and serine 51.

Belongs to the slowmo family.

The sequence is that of PRELI domain containing protein 3B (PRELID3B) from Bos taurus (Bovine).